Consider the following 417-residue polypeptide: Serine hydroxymethyltransferase 3 (417 aa).

(6S)-5,6,7,8-tetrahydrofolate contacts are provided by residues Leu-121 and 125–127 (GHL). The residue at position 230 (Lys-230) is an N6-(pyridoxal phosphate)lysine. 355-357 (SPF) is a (6S)-5,6,7,8-tetrahydrofolate binding site.

Belongs to the SHMT family. Homodimer. Requires pyridoxal 5'-phosphate as cofactor.

The protein resides in the cytoplasm. The catalysed reaction is (6R)-5,10-methylene-5,6,7,8-tetrahydrofolate + glycine + H2O = (6S)-5,6,7,8-tetrahydrofolate + L-serine. Its pathway is one-carbon metabolism; tetrahydrofolate interconversion. The protein operates within amino-acid biosynthesis; glycine biosynthesis; glycine from L-serine: step 1/1. Functionally, catalyzes the reversible interconversion of serine and glycine with tetrahydrofolate (THF) serving as the one-carbon carrier. This reaction serves as the major source of one-carbon groups required for the biosynthesis of purines, thymidylate, methionine, and other important biomolecules. Also exhibits THF-independent aldolase activity toward beta-hydroxyamino acids, producing glycine and aldehydes, via a retro-aldol mechanism. The protein is Serine hydroxymethyltransferase 3 of Pseudomonas fluorescens (strain Pf0-1).